We begin with the raw amino-acid sequence, 236 residues long: Virion protein US10 homolog (236 aa).

The tract at residues 1-32 is disordered; sequence MDGAYGHVHNGSPMAVDGEESGAGTGTGAGAD. Residues 21–31 show a composition bias toward gly residues; it reads SGAGTGTGAGA. The segment at 138–150 is a zinc-finger region; sequence CAYWCCLGHAFAC.

Belongs to the herpesviridae US10 family. In terms of processing, phosphorylated.

The protein resides in the virion tegument. It localises to the host nucleus matrix. This is Virion protein US10 homolog (IR5) from Equine herpesvirus 1 (strain Kentucky A) (EHV-1).